A 699-amino-acid chain; its full sequence is tRNA 5-methylaminomethyl-2-thiouridine biosynthesis bifunctional protein MnmC (699 aa).

The interval 1–260 (MTAKPHISCQ…ERKLLRQQAN (260 aa)) is tRNA (mnm(5)s(2)U34)-methyltransferase. Positions 282–699 (IGGGLASAHL…LRKLLKGKAL (418 aa)) are FAD-dependent cmnm(5)s(2)U34 oxidoreductase.

The protein in the N-terminal section; belongs to the methyltransferase superfamily. tRNA (mnm(5)s(2)U34)-methyltransferase family. In the C-terminal section; belongs to the DAO family. The cofactor is FAD.

Its subcellular location is the cytoplasm. It carries out the reaction 5-aminomethyl-2-thiouridine(34) in tRNA + S-adenosyl-L-methionine = 5-methylaminomethyl-2-thiouridine(34) in tRNA + S-adenosyl-L-homocysteine + H(+). In terms of biological role, catalyzes the last two steps in the biosynthesis of 5-methylaminomethyl-2-thiouridine (mnm(5)s(2)U) at the wobble position (U34) in tRNA. Catalyzes the FAD-dependent demodification of cmnm(5)s(2)U34 to nm(5)s(2)U34, followed by the transfer of a methyl group from S-adenosyl-L-methionine to nm(5)s(2)U34, to form mnm(5)s(2)U34. The polypeptide is tRNA 5-methylaminomethyl-2-thiouridine biosynthesis bifunctional protein MnmC (Shewanella oneidensis (strain ATCC 700550 / JCM 31522 / CIP 106686 / LMG 19005 / NCIMB 14063 / MR-1)).